A 509-amino-acid chain; its full sequence is Maturase K (509 aa).

It belongs to the intron maturase 2 family. MatK subfamily.

The protein resides in the plastid. The protein localises to the chloroplast. Functionally, usually encoded in the trnK tRNA gene intron. Probably assists in splicing its own and other chloroplast group II introns. The sequence is that of Maturase K from Avicennia marina (Grey mangrove).